The chain runs to 2296 residues: Protein Ycf2 (2296 aa).

1650-1657 (GSIGIGRS) lines the ATP pocket.

The protein belongs to the Ycf2 family.

The protein resides in the plastid. The protein localises to the chloroplast stroma. Its function is as follows. Probable ATPase of unknown function. Its presence in a non-photosynthetic plant (Epifagus virginiana) and experiments in tobacco indicate that it has an essential function which is probably not related to photosynthesis. In Arabis hirsuta (Hairy rock-cress), this protein is Protein Ycf2.